Reading from the N-terminus, the 318-residue chain is Methionyl-tRNA formyltransferase (318 aa).

(6S)-5,6,7,8-tetrahydrofolate is bound at residue 110-113; that stretch reads SLLP.

This sequence belongs to the Fmt family.

It carries out the reaction L-methionyl-tRNA(fMet) + (6R)-10-formyltetrahydrofolate = N-formyl-L-methionyl-tRNA(fMet) + (6S)-5,6,7,8-tetrahydrofolate + H(+). In terms of biological role, attaches a formyl group to the free amino group of methionyl-tRNA(fMet). The formyl group appears to play a dual role in the initiator identity of N-formylmethionyl-tRNA by promoting its recognition by IF2 and preventing the misappropriation of this tRNA by the elongation apparatus. In Latilactobacillus sakei subsp. sakei (strain 23K) (Lactobacillus sakei subsp. sakei), this protein is Methionyl-tRNA formyltransferase.